A 179-amino-acid polypeptide reads, in one-letter code: Large ribosomal subunit protein uL6 (179 aa).

Belongs to the universal ribosomal protein uL6 family. In terms of assembly, part of the 50S ribosomal subunit.

This protein binds to the 23S rRNA, and is important in its secondary structure. It is located near the subunit interface in the base of the L7/L12 stalk, and near the tRNA binding site of the peptidyltransferase center. In Nocardia farcinica (strain IFM 10152), this protein is Large ribosomal subunit protein uL6.